The sequence spans 179 residues: Protein HoxT (179 aa).

The chain is Protein HoxT (hoxT) from Cupriavidus necator (strain ATCC 17699 / DSM 428 / KCTC 22496 / NCIMB 10442 / H16 / Stanier 337) (Ralstonia eutropha).